The following is a 291-amino-acid chain: Protease HtpX homolog (291 aa).

Helical transmembrane passes span 4–24 (ILLF…VASL) and 39–59 (SALL…SLLI). His144 is a binding site for Zn(2+). Glu145 is an active-site residue. A Zn(2+)-binding site is contributed by His148. The next 2 helical transmembrane spans lie at 159-179 (LIQG…GYAV) and 199-219 (VSTI…VAWF). Residue Glu224 participates in Zn(2+) binding.

It belongs to the peptidase M48B family. Requires Zn(2+) as cofactor.

The protein localises to the cell inner membrane. In Polaromonas naphthalenivorans (strain CJ2), this protein is Protease HtpX homolog.